A 339-amino-acid chain; its full sequence is tRNA(Ile)-lysidine synthase (339 aa).

An ATP-binding site is contributed by 34–39 (SGGPDS).

It belongs to the tRNA(Ile)-lysidine synthase family.

The protein resides in the cytoplasm. It carries out the reaction cytidine(34) in tRNA(Ile2) + L-lysine + ATP = lysidine(34) in tRNA(Ile2) + AMP + diphosphate + H(+). Functionally, ligates lysine onto the cytidine present at position 34 of the AUA codon-specific tRNA(Ile) that contains the anticodon CAU, in an ATP-dependent manner. Cytidine is converted to lysidine, thus changing the amino acid specificity of the tRNA from methionine to isoleucine. In Methylobacterium nodulans (strain LMG 21967 / CNCM I-2342 / ORS 2060), this protein is tRNA(Ile)-lysidine synthase.